The primary structure comprises 524 residues: GMP synthase [glutamine-hydrolyzing] (524 aa).

The Glutamine amidotransferase type-1 domain maps to 5–195; the sequence is KVIVIDFGGQ…VRGVCGCAGT (191 aa). Residue Cys82 is the Nucleophile of the active site. Catalysis depends on residues His169 and Glu171. The GMPS ATP-PPase domain occupies 196-389; the sequence is WKMDSFVKNT…LGLPDYLVFR (194 aa). Position 223-229 (223-229) interacts with ATP; sequence SGGVDSS.

In terms of assembly, homodimer.

It catalyses the reaction XMP + L-glutamine + ATP + H2O = GMP + L-glutamate + AMP + diphosphate + 2 H(+). It participates in purine metabolism; GMP biosynthesis; GMP from XMP (L-Gln route): step 1/1. Catalyzes the synthesis of GMP from XMP. The polypeptide is GMP synthase [glutamine-hydrolyzing] (Agathobacter rectalis (strain ATCC 33656 / DSM 3377 / JCM 17463 / KCTC 5835 / VPI 0990) (Eubacterium rectale)).